A 479-amino-acid chain; its full sequence is Integrin-linked protein kinase 1 (479 aa).

A phosphoserine mark is found at S17 and S26. Residues 29–73 (FTRQSSLDPRRTNMRFSFGRQSSLDPIRRSPDSSKSDDEPHMSVP) are disordered. Over residues 54-69 (PIRRSPDSSKSDDEPH) the composition is skewed to basic and acidic residues. ANK repeat units lie at residues 77–106 (DSTM…DVNS) and 110–139 (DGRT…NIDA). Residues 194 to 461 (LEVQVRKSDG…EIIIRLDKIV (268 aa)) enclose the Protein kinase domain. ATP contacts are provided by residues 200 to 208 (KSDGISKGA) and K222. D319 functions as the Proton acceptor in the catalytic mechanism.

This sequence belongs to the protein kinase superfamily. Ser/Thr protein kinase family. As to quaternary structure, interacts with CML9 and POT5/HAK5. Post-translationally, autophosphorylated at Ser-17 and Ser-26.

It localises to the cell membrane. Its subcellular location is the endoplasmic reticulum membrane. It carries out the reaction L-seryl-[protein] + ATP = O-phospho-L-seryl-[protein] + ADP + H(+). The catalysed reaction is L-threonyl-[protein] + ATP = O-phospho-L-threonyl-[protein] + ADP + H(+). With respect to regulation, kinase activity is suppressed by interaction with CML9. Functions as a link between plant defense pathways, stress responses and potassium homeostasis. Promotes osmotic stress sensitivity, responses to the bacterial-derived pathogen-associated molecular pattern (PAMP) flg22, and resistance to bacterial pathogens. Promotes the accumulation of POT5/HAK5, a potassium transporter that mediates high-affinity uptake during potassium deficiency. The sequence is that of Integrin-linked protein kinase 1 from Arabidopsis thaliana (Mouse-ear cress).